Reading from the N-terminus, the 93-residue chain is Small ribosomal subunit protein uS19 (93 aa).

2 disordered regions span residues 1–25 and 74–93; these read MPRS…QNTK and FAPT…ARRR. 2 stretches are compositionally biased toward basic and acidic residues: residues 14 to 23 and 81 to 93; these read HLQKKVDDQN and RGHD…ARRR.

It belongs to the universal ribosomal protein uS19 family.

Protein S19 forms a complex with S13 that binds strongly to the 16S ribosomal RNA. The polypeptide is Small ribosomal subunit protein uS19 (Beutenbergia cavernae (strain ATCC BAA-8 / DSM 12333 / CCUG 43141 / JCM 11478 / NBRC 16432 / NCIMB 13614 / HKI 0122)).